An 89-amino-acid polypeptide reads, in one-letter code: uncharacterized protein (89 aa).

The next 2 membrane-spanning stretches (helical) occupy residues 11–31 (IFGAVILVSMIGALVAEPIAL) and 63–83 (AAISAALGPAGLASGVFTVVF).

The protein resides in the cell membrane. This is an uncharacterized protein from Methanocaldococcus jannaschii (strain ATCC 43067 / DSM 2661 / JAL-1 / JCM 10045 / NBRC 100440) (Methanococcus jannaschii).